The primary structure comprises 763 residues: MNVALHELGGGGSMVEYKRAKLRDEESPEITVEGRATRDSLEVGFQKRTRQLFGSHTQLELVLAGLILVLAALLLGCLVALWVHRDPAHSTCVTEACIRVAGKILESLDRGVSPCQDFYQFSCGGWIRRNPLPNGRSRWNTFNSLWDQNQAILKHLLENTTFNSSSEAERKTRSFYLSCLQSERIEKLGAKPLRDLIDKIGGWNITGPWDEDSFMDVLKAVAGTYRATPFFTVYVSADSKSSNSNIIQVDQSGLFLPSRDYYLNRTANEKVLTAYLDYMVELGVLLGGQPTSTREQMQQVLELEIQLANITVPQDQRRDEEKIYHKMSISELQALAPAVDWLEFLSFLLSPLELGDSEPVVVYGTEYLQQVSELINRTEPSILNNYLIWNLVQKTTSSLDQRFETAQEKLLETLYGTKKSCTPRWQTCISNTDDALGFALGSLFVKATFDRQSKEIAEGMINEIRSAFEETLGDLVWMDEKTRLAAKEKADAIYDMIGFPDFILEPKELDDVYDGYEVSEDSFFQNMLNLYNFSAKVMADQLRKPPSRDQWSMTPQTVNAYYLPTKNEIVFPAGILQAPFYAHNHPKALNFGGIGVVMGHELTHAFDDQGREYDKEGNLRPWWQNESLTAFQNHTACMEEQYSQYQVNGERLNGLQTLGENIADNGGLKAAYNAYKAWLRKHGEEQPLPAVGLTNHQLFFVGFAQVWCSVRTPESSHEGLVTDPHSPARFRVLGTLSNSRDFLRHFGCPVGSPMNPGQLCEVW.

Topologically, residues Met1–Glu60 are cytoplasmic. Ser27 carries the post-translational modification Phosphoserine. A helical; Signal-anchor for type II membrane protein transmembrane segment spans residues Leu61–Leu81. The Lumenal segment spans residues Trp82–Trp763. One can recognise a Peptidase M13 domain in the interval Thr91–Trp763. Cystine bridges form between Cys92–Cys97, Cys115–Cys748, Cys123–Cys708, Cys179–Cys428, and Cys637–Cys760. Residues Asn159, Asn163, Asn204, Asn264, Asn309, Asn376, and Asn532 are each glycosylated (N-linked (GlcNAc...) asparagine). His600 is a binding site for Zn(2+). Residue Glu601 is part of the active site. Zn(2+) is bound at residue His604. Residues Asn625 and Asn633 are each glycosylated (N-linked (GlcNAc...) asparagine). Residue Glu660 coordinates Zn(2+). Catalysis depends on Asp664, which acts as the Proton donor.

This sequence belongs to the peptidase M13 family. Zn(2+) is required as a cofactor.

It is found in the golgi apparatus membrane. The protein resides in the cytoplasmic vesicle. Its subcellular location is the secretory vesicle membrane. It carries out the reaction Hydrolysis of the 21-Trp-|-Val-22 bond in big endothelin to form endothelin 1.. Converts big endothelin-1 to endothelin-1. Also involved in the processing of various neuroendocrine peptides, including neurotensin, angiotensin I, substance P, proenkephalin-derived peptides, and prodynorphin-derived peptides. May play a role in amyloid-beta processing. The protein is Endothelin-converting enzyme 2 of Mus musculus (Mouse).